Here is a 250-residue protein sequence, read N- to C-terminus: 1-(5-phosphoribosyl)-5-[(5-phosphoribosylamino)methylideneamino] imidazole-4-carboxamide isomerase (250 aa).

Asp-12 (proton acceptor) is an active-site residue. The active-site Proton donor is the Asp-134.

It belongs to the HisA/HisF family.

The protein localises to the cytoplasm. The catalysed reaction is 1-(5-phospho-beta-D-ribosyl)-5-[(5-phospho-beta-D-ribosylamino)methylideneamino]imidazole-4-carboxamide = 5-[(5-phospho-1-deoxy-D-ribulos-1-ylimino)methylamino]-1-(5-phospho-beta-D-ribosyl)imidazole-4-carboxamide. The protein operates within amino-acid biosynthesis; L-histidine biosynthesis; L-histidine from 5-phospho-alpha-D-ribose 1-diphosphate: step 4/9. The protein is 1-(5-phosphoribosyl)-5-[(5-phosphoribosylamino)methylideneamino] imidazole-4-carboxamide isomerase of Actinobacillus pleuropneumoniae serotype 7 (strain AP76).